Here is a 508-residue protein sequence, read N- to C-terminus: Ribose import ATP-binding protein RbsA 2 (508 aa).

2 consecutive ABC transporter domains span residues 6–241 (LTIH…VGRE) and 254–499 (ERSG…SGMG). 38 to 45 (GENGAGKS) is a binding site for ATP.

Belongs to the ABC transporter superfamily. Ribose importer (TC 3.A.1.2.1) family. As to quaternary structure, the complex is composed of an ATP-binding protein (RbsA), two transmembrane proteins (RbsC) and a solute-binding protein (RbsB).

It is found in the cell inner membrane. It catalyses the reaction D-ribose(out) + ATP + H2O = D-ribose(in) + ADP + phosphate + H(+). Functionally, part of the ABC transporter complex RbsABC involved in ribose import. Responsible for energy coupling to the transport system. The chain is Ribose import ATP-binding protein RbsA 2 from Rhizobium etli (strain ATCC 51251 / DSM 11541 / JCM 21823 / NBRC 15573 / CFN 42).